Consider the following 240-residue polypeptide: MAFDISVNASKTINALVYFSTQQNKLVIRNEVNDTHYTVEFDRDKVVDTFISYNRHNDTIEIRGVLPEETNIGCAVNTPVSMTYLYNKYSFKLILAEYIRHRNTISGNIYSALMTLDDLAIKQYGDIDLLFNEKLKVDSDSGLFDFVNFVKDMICCDSRIVVALSSLVSKHWELTNKKYRCMALAEHISDSIPISELSRLRYNLCKYLRGHTESIEDKFDYFEDDDSSTCSAVTDRETDV.

The protein belongs to the orthopoxvirus OPG176 family. In terms of assembly, tetramer. Interacts with host MYD88, TRF4, TICAM2 and MAL.

Its function is as follows. BCL2-like protein which disrupts the host immune response by inhibiting the TLR4 signaling pathway leading to NF-kappa-B activation. Acts close to the plasma membrane and targets several host TIR-domain containing adapter proteins including MYD88, TIRAP, TRIF and TICAM2. In turn, blocks the host NF-kappa-B and TRIF-mediated IRF3 activation. This Bos taurus (Bovine) protein is Protein OPG176 (OPG176).